We begin with the raw amino-acid sequence, 296 residues long: uncharacterized protein (296 aa).

The protein to Synechocystis PCC 6803 sll0787 and M.jannaschii MJ0640.

This is an uncharacterized protein from Methanocaldococcus jannaschii (strain ATCC 43067 / DSM 2661 / JAL-1 / JCM 10045 / NBRC 100440) (Methanococcus jannaschii).